Consider the following 315-residue polypeptide: tRNA-specific adenosine deaminase subunit tad3 (315 aa).

The 142-residue stretch at 158–299 folds into the CMP/dCMP-type deaminase domain; sequence KRIESILEDL…AELNHRYLAY (142 aa). Zn(2+) contacts are provided by H211, C253, and C256.

Belongs to the cytidine and deoxycytidylate deaminase family. ADAT3 subfamily. As to quaternary structure, heterodimer with Tad2.

It localises to the cytoplasm. It is found in the nucleus. In terms of biological role, structural subunit of tRNA-specific adenosine deaminase, which deaminates adenosine-34 (the first, also called wobble position of the anticodon) to inosine in many tRNAs. Inosine-34 allows the decoding of 3 different nucleotides at the third position of mRNA codons, as inosine is able to pair with U, C, and A. The wobble inosine tRNA modification is essential for cell cycle progression in the G1/S and G2/M transitions in fission yeast. This is tRNA-specific adenosine deaminase subunit tad3 (tad3) from Schizosaccharomyces pombe (strain 972 / ATCC 24843) (Fission yeast).